The sequence spans 1461 residues: Selection and upkeep of intraepithelial T-cells protein 5 (1461 aa).

A signal peptide spans M1 to S24. Over S25–K1306 the chain is Extracellular. One can recognise an Ig-like V-type domain in the interval E26–K139. Disulfide bonds link C49/C123 and C163/C217. The Ig-like C1-type domain occupies A142–S231. N-linked (GlcNAc...) asparagine glycosylation occurs at N200. Residues Y1307–L1327 form a helical membrane-spanning segment. Topologically, residues K1328 to D1345 are cytoplasmic. The helical transmembrane segment at T1346–F1366 threads the bilayer. The Extracellular segment spans residues R1367 to R1387. A helical membrane pass occupies residues F1388–I1408. Over Q1409 to M1427 the chain is Cytoplasmic. Residues V1428–F1448 form a helical membrane-spanning segment. The Extracellular segment spans residues D1449–G1461.

The protein belongs to the SKINT family. In terms of tissue distribution, expressed in skin and, to a lower extent, testis.

It localises to the membrane. In terms of biological role, may act by engaging a cell surface molecule on immature T-cells in the embryonic thymus. This Mus musculus (Mouse) protein is Selection and upkeep of intraepithelial T-cells protein 5 (Skint5).